The following is a 586-amino-acid chain: Dihydroxy-acid dehydratase 2 (586 aa).

Residue Cys68 participates in [2Fe-2S] cluster binding. Asp100 provides a ligand contact to Mg(2+). [2Fe-2S] cluster is bound at residue Cys141. 2 residues coordinate Mg(2+): Asp142 and Lys143. N6-carboxylysine is present on Lys143. Cys213 provides a ligand contact to [2Fe-2S] cluster. Glu463 provides a ligand contact to Mg(2+). Catalysis depends on Ser489, which acts as the Proton acceptor.

The protein belongs to the IlvD/Edd family. In terms of assembly, homodimer. [2Fe-2S] cluster is required as a cofactor. The cofactor is Mg(2+).

The enzyme catalyses (2R)-2,3-dihydroxy-3-methylbutanoate = 3-methyl-2-oxobutanoate + H2O. It catalyses the reaction (2R,3R)-2,3-dihydroxy-3-methylpentanoate = (S)-3-methyl-2-oxopentanoate + H2O. The protein operates within amino-acid biosynthesis; L-isoleucine biosynthesis; L-isoleucine from 2-oxobutanoate: step 3/4. It functions in the pathway amino-acid biosynthesis; L-valine biosynthesis; L-valine from pyruvate: step 3/4. In terms of biological role, functions in the biosynthesis of branched-chain amino acids. Catalyzes the dehydration of (2R,3R)-2,3-dihydroxy-3-methylpentanoate (2,3-dihydroxy-3-methylvalerate) into 2-oxo-3-methylpentanoate (2-oxo-3-methylvalerate) and of (2R)-2,3-dihydroxy-3-methylbutanoate (2,3-dihydroxyisovalerate) into 2-oxo-3-methylbutanoate (2-oxoisovalerate), the penultimate precursor to L-isoleucine and L-valine, respectively. The sequence is that of Dihydroxy-acid dehydratase 2 from Mesorhizobium japonicum (strain LMG 29417 / CECT 9101 / MAFF 303099) (Mesorhizobium loti (strain MAFF 303099)).